We begin with the raw amino-acid sequence, 357 residues long: Histidinol-phosphate aminotransferase 1 (357 aa).

The residue at position 210 (Lys210) is an N6-(pyridoxal phosphate)lysine.

This sequence belongs to the class-II pyridoxal-phosphate-dependent aminotransferase family. Histidinol-phosphate aminotransferase subfamily. As to quaternary structure, homodimer. Requires pyridoxal 5'-phosphate as cofactor.

It catalyses the reaction L-histidinol phosphate + 2-oxoglutarate = 3-(imidazol-4-yl)-2-oxopropyl phosphate + L-glutamate. Its pathway is amino-acid biosynthesis; L-histidine biosynthesis; L-histidine from 5-phospho-alpha-D-ribose 1-diphosphate: step 7/9. The sequence is that of Histidinol-phosphate aminotransferase 1 from Methylococcus capsulatus (strain ATCC 33009 / NCIMB 11132 / Bath).